The following is a 399-amino-acid chain: Methylthioribose kinase (399 aa).

ATP is bound by residues asparagine 40, lysine 57, and 111-113; that span reads EDL. A substrate-binding site is contributed by aspartate 229. ATP is bound at residue 246–248; sequence DAE. A substrate-binding site is contributed by arginine 344.

It belongs to the methylthioribose kinase family. As to quaternary structure, homodimer.

It catalyses the reaction 5-(methylsulfanyl)-D-ribose + ATP = 5-(methylsulfanyl)-alpha-D-ribose 1-phosphate + ADP + H(+). Its pathway is amino-acid biosynthesis; L-methionine biosynthesis via salvage pathway; S-methyl-5-thio-alpha-D-ribose 1-phosphate from S-methyl-5'-thioadenosine (hydrolase route): step 2/2. In terms of biological role, catalyzes the phosphorylation of methylthioribose into methylthioribose-1-phosphate. The protein is Methylthioribose kinase of Citrobacter koseri (strain ATCC BAA-895 / CDC 4225-83 / SGSC4696).